A 988-amino-acid polypeptide reads, in one-letter code: Exportin-T (988 aa).

It belongs to the exportin family.

It is found in the nucleus. The protein localises to the cytoplasm. In terms of biological role, tRNA nucleus export receptor which facilitates tRNA translocation across the nuclear pore complex. Involved in pre-tRNA splicing, probably by affecting the interaction of pre-tRNA with splicing endonuclease. The protein is Exportin-T (LOS1) of Lodderomyces elongisporus (strain ATCC 11503 / CBS 2605 / JCM 1781 / NBRC 1676 / NRRL YB-4239) (Yeast).